The following is a 472-amino-acid chain: Poly(A) polymerase catalytic subunit (472 aa).

Residues Asp-194 and Asp-196 contribute to the active site.

It belongs to the poxviridae poly(A) polymerase catalytic subunit family. In terms of assembly, heterodimer of a large (catalytic) subunit and a small (regulatory) subunit.

It carries out the reaction RNA(n) + ATP = RNA(n)-3'-adenine ribonucleotide + diphosphate. In terms of biological role, polymerase that creates the 3'-poly(A) tail of mRNA's. The chain is Poly(A) polymerase catalytic subunit (PAPL) from Serinus (CNPV).